The primary structure comprises 148 residues: Large ribosomal subunit protein uL15 (148 aa).

The tract at residues 1–46 (MITIEDLKPTPGSNKKYKRLGRGQGSGKGKTAGKGHKGQKSRGTGK) is disordered. Residues 31 to 45 (TAGKGHKGQKSRGTG) are compositionally biased toward basic residues.

Belongs to the universal ribosomal protein uL15 family. As to quaternary structure, part of the 50S ribosomal subunit.

Binds to the 23S rRNA. The polypeptide is Large ribosomal subunit protein uL15 (Fervidobacterium nodosum (strain ATCC 35602 / DSM 5306 / Rt17-B1)).